Consider the following 618-residue polypeptide: Probable Xaa-Pro aminopeptidase P (618 aa).

4 residues coordinate Mn(2+): aspartate 414, aspartate 425, glutamate 523, and glutamate 537.

This sequence belongs to the peptidase M24B family. Mn(2+) serves as cofactor.

It carries out the reaction Release of any N-terminal amino acid, including proline, that is linked to proline, even from a dipeptide or tripeptide.. Its function is as follows. Catalyzes the removal of a penultimate prolyl residue from the N-termini of peptides. The chain is Probable Xaa-Pro aminopeptidase P (AMPP) from Metarhizium acridum (strain CQMa 102).